The following is an 80-amino-acid chain: Toxin Acra I-2 (80 aa).

The signal sequence occupies residues 1–22 (MMKLALFSIIVILFSLIGSIHG). The 56-residue stretch at 25 to 80 (VPGNYPLDSSGNKYPCTVLGDNQSCIDVCKKHGVKYGYCYSFKCWCEFLEDKNVSI) folds into the LCN-type CS-alpha/beta domain. 3 disulfides stabilise this stretch: Cys40-Cys63, Cys49-Cys68, and Cys53-Cys70.

In terms of tissue distribution, expressed by the venom gland.

The protein resides in the secreted. Its function is as follows. Probable neurotoxin that inhibits ion channels. Is toxic to mice. Is about 2.8% of the total protein in the venom. This Androctonus crassicauda (Arabian fat-tailed scorpion) protein is Toxin Acra I-2.